Reading from the N-terminus, the 384-residue chain is MNSTLFSQVENHSVHSNFSEKNAQLLAFENDDCHLPLAMIFTLALAYGAVIILGVSGNLALIIIILKQKEMRNVTNILIVNLSFSDLLVAIMCLPFTFVYTLMDHWVFGEAMCKLNPFVQCVSITVSIFSLVLIAVERHQLIINPRGWRPNNRHAYVGIAVIWVLAVASSLPFLIYQVMTDEPFQNVTLDAYKDKYVCFDQFPSDSHRLSYTTLLLVLQYFGPLCFIFICYFKIYIRLKRRNNMMDKMRDNKYRSSETKRINIMLLSIVVAFAVCWLPLTIFNTVFDWNHQIIATCNHNLLFLLCHLTAMISTCVNPIFYGFLNKNFQRDLQFFFNFCDFRSRDDDYETIAMSTMHTDVSKTSLKQASPVAFKKINNNDDNEKI.

Residues 1-44 (MNSTLFSQVENHSVHSNFSEKNAQLLAFENDDCHLPLAMIFTLA) lie on the Extracellular side of the membrane. Asn-2, Asn-11, and Asn-17 each carry an N-linked (GlcNAc...) asparagine glycan. The chain crosses the membrane as a helical span at residues 45–65 (LAYGAVIILGVSGNLALIIII). Residues 66–76 (LKQKEMRNVTN) are Cytoplasmic-facing. A helical membrane pass occupies residues 77-97 (ILIVNLSFSDLLVAIMCLPFT). At 98–116 (FVYTLMDHWVFGEAMCKLN) the chain is on the extracellular side. The cysteines at positions 113 and 198 are disulfide-linked. The helical transmembrane segment at 117-137 (PFVQCVSITVSIFSLVLIAVE) threads the bilayer. At 138-154 (RHQLIINPRGWRPNNRH) the chain is on the cytoplasmic side. Residues 155 to 175 (AYVGIAVIWVLAVASSLPFLI) form a helical membrane-spanning segment. Residues 176–211 (YQVMTDEPFQNVTLDAYKDKYVCFDQFPSDSHRLSY) are Extracellular-facing. Residues 212 to 232 (TTLLLVLQYFGPLCFIFICYF) form a helical membrane-spanning segment. The Cytoplasmic portion of the chain corresponds to 233–260 (KIYIRLKRRNNMMDKMRDNKYRSSETKR). The chain crosses the membrane as a helical span at residues 261–281 (INIMLLSIVVAFAVCWLPLTI). The Extracellular portion of the chain corresponds to 282–299 (FNTVFDWNHQIIATCNHN). A helical transmembrane segment spans residues 300–320 (LLFLLCHLTAMISTCVNPIFY). Residues 321–384 (GFLNKNFQRD…INNNDDNEKI (64 aa)) are Cytoplasmic-facing. Residue Cys-338 is the site of S-palmitoyl cysteine attachment. A Phosphoserine modification is found at Ser-368.

This sequence belongs to the G-protein coupled receptor 1 family.

It is found in the cell membrane. Receptor for neuropeptide Y and peptide YY. The rank order of affinity of this receptor for pancreatic polypeptides is NPY &gt; [Pro-34] PYY, PYY and [Leu-31, Pro-34] NPY &gt; NPY (2-36) &gt; [Ile-31, Gln-34] PP and PYY (3-36) &gt; PP &gt; NPY free acid. This Homo sapiens (Human) protein is Neuropeptide Y receptor type 1 (NPY1R).